We begin with the raw amino-acid sequence, 128 residues long: Holo-[acyl-carrier-protein] synthase (128 aa).

Mg(2+)-binding residues include aspartate 8 and glutamate 58.

This sequence belongs to the P-Pant transferase superfamily. AcpS family. Requires Mg(2+) as cofactor.

The protein resides in the cytoplasm. It catalyses the reaction apo-[ACP] + CoA = holo-[ACP] + adenosine 3',5'-bisphosphate + H(+). Transfers the 4'-phosphopantetheine moiety from coenzyme A to a Ser of acyl-carrier-protein. This Exiguobacterium sibiricum (strain DSM 17290 / CCUG 55495 / CIP 109462 / JCM 13490 / 255-15) protein is Holo-[acyl-carrier-protein] synthase.